A 62-amino-acid polypeptide reads, in one-letter code: Conotoxin Im11.9 (62 aa).

The N-terminal stretch at 1–22 (MFRVTSVLLVIVLLNLVVLTNA) is a signal peptide. 4 disulfides stabilise this stretch: Cys23–Cys33, Cys27–Cys38, Cys32–Cys41, and Cys37–Cys46. Positions 23–49 (CHMDCSKMTCCSGICCFYCGRPMCPGT) are excised as a propeptide.

It belongs to the conotoxin I2 superfamily. As to expression, expressed by the venom duct.

Its subcellular location is the secreted. Probable neurotoxin. In Conus imperialis (Imperial cone), this protein is Conotoxin Im11.9.